The primary structure comprises 212 residues: MSLFDKKHLVSPADALPGRNTPMPVATLHAVNGHSMTNVPDGMEIAIFAMGCFWGVERLFWQLPGVYSTAAGYTGGYTPNPTYREVCSGDTGHAEAVRIVYDPSVISYEQLLQVFWENHDPAQGMRQGNDHGTQYRSAIYPLTPEQDAAARASLERFQAAMLAADDDRRITTEIANATPFYYAEDDHQQYLHKNPYGYCGICGIGVCLPPEA.

Cysteine 52 is a catalytic residue.

Belongs to the MsrA Met sulfoxide reductase family.

The enzyme catalyses L-methionyl-[protein] + [thioredoxin]-disulfide + H2O = L-methionyl-(S)-S-oxide-[protein] + [thioredoxin]-dithiol. It carries out the reaction [thioredoxin]-disulfide + L-methionine + H2O = L-methionine (S)-S-oxide + [thioredoxin]-dithiol. Its function is as follows. Has an important function as a repair enzyme for proteins that have been inactivated by oxidation. Catalyzes the reversible oxidation-reduction of methionine sulfoxide in proteins to methionine. The sequence is that of Peptide methionine sulfoxide reductase MsrA from Escherichia coli (strain SMS-3-5 / SECEC).